The sequence spans 387 residues: Sulfate adenylyltransferase (387 aa).

This sequence belongs to the sulfate adenylyltransferase family.

It carries out the reaction sulfate + ATP + H(+) = adenosine 5'-phosphosulfate + diphosphate. It participates in sulfur metabolism; hydrogen sulfide biosynthesis; sulfite from sulfate: step 1/3. The protein is Sulfate adenylyltransferase (sat) of Deinococcus radiodurans (strain ATCC 13939 / DSM 20539 / JCM 16871 / CCUG 27074 / LMG 4051 / NBRC 15346 / NCIMB 9279 / VKM B-1422 / R1).